The primary structure comprises 206 residues: Superoxide dismutase [Mn] (206 aa).

Mn(2+) is bound by residues H27, H82, D168, and H172.

It belongs to the iron/manganese superoxide dismutase family. Mn(2+) is required as a cofactor.

It catalyses the reaction 2 superoxide + 2 H(+) = H2O2 + O2. In terms of biological role, destroys superoxide anion radicals which are normally produced within the cells and which are toxic to biological systems. This chain is Superoxide dismutase [Mn] (sodA), found in Lactococcus lactis subsp. lactis (strain IL1403) (Streptococcus lactis).